We begin with the raw amino-acid sequence, 238 residues long: 7-cyano-7-deazaguanine synthase (238 aa).

14–24 (FSGGQDSATCL) contacts ATP. Zn(2+) is bound by residues Cys-202, Cys-217, Cys-220, and Cys-223.

The protein belongs to the QueC family. Requires Zn(2+) as cofactor.

The catalysed reaction is 7-carboxy-7-deazaguanine + NH4(+) + ATP = 7-cyano-7-deazaguanine + ADP + phosphate + H2O + H(+). Its pathway is purine metabolism; 7-cyano-7-deazaguanine biosynthesis. Functionally, catalyzes the ATP-dependent conversion of 7-carboxy-7-deazaguanine (CDG) to 7-cyano-7-deazaguanine (preQ(0)). This chain is 7-cyano-7-deazaguanine synthase, found in Nitrobacter winogradskyi (strain ATCC 25391 / DSM 10237 / CIP 104748 / NCIMB 11846 / Nb-255).